The following is a 346-amino-acid chain: MNCDEIIKKLLLNPVHNTAATRGPAGENCESNQRTYTRISRLAAFQSAQTQESTPKTNGTGRATTEGLTEAEVRWLVMESRALFMSQPMLVEIAAPVRICGDVHGQYTDLLRLFDLGGFPPDANYIFLGDYVDRGDQSLERICLLLAYKLSFPETFFLLRGNHECSSINRIYGFFDECKRRYSVRLWKQFTDTFNCMPVAGLVEGRILCMHGGLSPELTDLDQIRRILRPTDVPDSGLICDLLWSDPSTNMESNWSENDRGVSWTFSESVVKSFNKKFDLDLICRAHQVVDAGYEFFAARQLVTVFSAPNYCDEFDNAGAFMCVDENFMCSFIRIEPTRTLLKYFF.

Residues 46–65 (QSAQTQESTPKTNGTGRATT) form a disordered region. Mn(2+)-binding residues include D102, H104, D130, and N162. The Proton donor role is filled by H163. Positions 211 and 287 each coordinate Mn(2+).

Belongs to the PPP phosphatase family. PP-1 subfamily. It depends on Mn(2+) as a cofactor.

The catalysed reaction is O-phospho-L-seryl-[protein] + H2O = L-seryl-[protein] + phosphate. It carries out the reaction O-phospho-L-threonyl-[protein] + H2O = L-threonyl-[protein] + phosphate. The chain is Serine/threonine-protein phosphatase PP1(4.8) from Trypanosoma brucei brucei.